A 338-amino-acid chain; its full sequence is Ketol-acid reductoisomerase (NADP(+)) (338 aa).

One can recognise a KARI N-terminal Rossmann domain in the interval Met-1–Thr-181. Residues Tyr-24–Gln-27, Arg-47, Ser-50, Ser-52, and Asp-82–Gln-85 each bind NADP(+). The active site involves His-107. An NADP(+)-binding site is contributed by Gly-133. The KARI C-terminal knotted domain maps to Ser-182–Ile-327. Mg(2+)-binding residues include Asp-190, Glu-194, Glu-226, and Glu-230. Substrate is bound at residue Ser-251.

Belongs to the ketol-acid reductoisomerase family. It depends on Mg(2+) as a cofactor.

It carries out the reaction (2R)-2,3-dihydroxy-3-methylbutanoate + NADP(+) = (2S)-2-acetolactate + NADPH + H(+). The catalysed reaction is (2R,3R)-2,3-dihydroxy-3-methylpentanoate + NADP(+) = (S)-2-ethyl-2-hydroxy-3-oxobutanoate + NADPH + H(+). Its pathway is amino-acid biosynthesis; L-isoleucine biosynthesis; L-isoleucine from 2-oxobutanoate: step 2/4. It functions in the pathway amino-acid biosynthesis; L-valine biosynthesis; L-valine from pyruvate: step 2/4. Involved in the biosynthesis of branched-chain amino acids (BCAA). Catalyzes an alkyl-migration followed by a ketol-acid reduction of (S)-2-acetolactate (S2AL) to yield (R)-2,3-dihydroxy-isovalerate. In the isomerase reaction, S2AL is rearranged via a Mg-dependent methyl migration to produce 3-hydroxy-3-methyl-2-ketobutyrate (HMKB). In the reductase reaction, this 2-ketoacid undergoes a metal-dependent reduction by NADPH to yield (R)-2,3-dihydroxy-isovalerate. This chain is Ketol-acid reductoisomerase (NADP(+)), found in Magnetococcus marinus (strain ATCC BAA-1437 / JCM 17883 / MC-1).